We begin with the raw amino-acid sequence, 223 residues long: Ribonuclease 3 (223 aa).

One can recognise an RNase III domain in the interval 4 to 127; it reads LENLQKLLGY…VMGAVYLEAG (124 aa). A Mg(2+)-binding site is contributed by Glu-40. Asp-44 is an active-site residue. Residues Asp-113 and Glu-116 each contribute to the Mg(2+) site. The active site involves Glu-116. Residues 154–223 enclose the DRBM domain; it reads DYKTALQEIT…AKIALEKMKK (70 aa).

The protein belongs to the ribonuclease III family. In terms of assembly, homodimer. The cofactor is Mg(2+).

The protein resides in the cytoplasm. The catalysed reaction is Endonucleolytic cleavage to 5'-phosphomonoester.. In terms of biological role, digests double-stranded RNA. Involved in the processing of primary rRNA transcript to yield the immediate precursors to the large and small rRNAs (23S and 16S). Processes some mRNAs, and tRNAs when they are encoded in the rRNA operon. Processes pre-crRNA and tracrRNA of type II CRISPR loci if present in the organism. The polypeptide is Ribonuclease 3 (Campylobacter curvus (strain 525.92)).